A 515-amino-acid polypeptide reads, in one-letter code: Maturase K (515 aa).

Belongs to the intron maturase 2 family. MatK subfamily.

Its subcellular location is the plastid. The protein localises to the chloroplast. Its function is as follows. Usually encoded in the trnK tRNA gene intron. Probably assists in splicing its own and other chloroplast group II introns. This chain is Maturase K, found in Pinus cembra (Swiss stone pine).